The chain runs to 216 residues: Nucleoside triphosphate pyrophosphatase (216 aa).

D82 functions as the Proton acceptor in the catalytic mechanism.

Belongs to the Maf family. Requires a divalent metal cation as cofactor.

The protein resides in the cytoplasm. The enzyme catalyses a ribonucleoside 5'-triphosphate + H2O = a ribonucleoside 5'-phosphate + diphosphate + H(+). The catalysed reaction is a 2'-deoxyribonucleoside 5'-triphosphate + H2O = a 2'-deoxyribonucleoside 5'-phosphate + diphosphate + H(+). Its function is as follows. Nucleoside triphosphate pyrophosphatase. May have a dual role in cell division arrest and in preventing the incorporation of modified nucleotides into cellular nucleic acids. The chain is Nucleoside triphosphate pyrophosphatase from Mycobacterium marinum (strain ATCC BAA-535 / M).